The chain runs to 306 residues: Aspartate carbamoyltransferase catalytic subunit (306 aa).

2 residues coordinate carbamoyl phosphate: arginine 55 and threonine 56. Lysine 84 contacts L-aspartate. Carbamoyl phosphate-binding residues include arginine 105, histidine 133, and glutamine 136. Residues arginine 166 and arginine 227 each coordinate L-aspartate. Positions 265 and 266 each coordinate carbamoyl phosphate.

Belongs to the aspartate/ornithine carbamoyltransferase superfamily. ATCase family. As to quaternary structure, heterododecamer (2C3:3R2) of six catalytic PyrB chains organized as two trimers (C3), and six regulatory PyrI chains organized as three dimers (R2).

It catalyses the reaction carbamoyl phosphate + L-aspartate = N-carbamoyl-L-aspartate + phosphate + H(+). Its pathway is pyrimidine metabolism; UMP biosynthesis via de novo pathway; (S)-dihydroorotate from bicarbonate: step 2/3. In terms of biological role, catalyzes the condensation of carbamoyl phosphate and aspartate to form carbamoyl aspartate and inorganic phosphate, the committed step in the de novo pyrimidine nucleotide biosynthesis pathway. This Neisseria gonorrhoeae (strain NCCP11945) protein is Aspartate carbamoyltransferase catalytic subunit.